We begin with the raw amino-acid sequence, 118 residues long: Small ribosomal subunit protein uS13 (118 aa).

The tract at residues 92 to 118 is disordered; the sequence is RRGLPVRGQRTKTNARTRKGPRKPIKK.

This sequence belongs to the universal ribosomal protein uS13 family. Part of the 30S ribosomal subunit. Forms a loose heterodimer with protein S19. Forms two bridges to the 50S subunit in the 70S ribosome.

Functionally, located at the top of the head of the 30S subunit, it contacts several helices of the 16S rRNA. In the 70S ribosome it contacts the 23S rRNA (bridge B1a) and protein L5 of the 50S subunit (bridge B1b), connecting the 2 subunits; these bridges are implicated in subunit movement. Contacts the tRNAs in the A and P-sites. This is Small ribosomal subunit protein uS13 from Yersinia pestis.